A 315-amino-acid polypeptide reads, in one-letter code: DNA-directed RNA polymerase subunit alpha (315 aa).

The segment at 1-228 (MLEIEKPKIE…EHLRLFIGLT (228 aa)) is alpha N-terminal domain (alpha-NTD). Positions 245 to 315 (KDKILEMTIE…LGLGFRKADD (71 aa)) are alpha C-terminal domain (alpha-CTD).

It belongs to the RNA polymerase alpha chain family. In terms of assembly, homodimer. The RNAP catalytic core consists of 2 alpha, 1 beta, 1 beta' and 1 omega subunit. When a sigma factor is associated with the core the holoenzyme is formed, which can initiate transcription.

The catalysed reaction is RNA(n) + a ribonucleoside 5'-triphosphate = RNA(n+1) + diphosphate. DNA-dependent RNA polymerase catalyzes the transcription of DNA into RNA using the four ribonucleoside triphosphates as substrates. This is DNA-directed RNA polymerase subunit alpha from Desulfitobacterium hafniense (strain DSM 10664 / DCB-2).